The sequence spans 599 residues: Membrane protein insertase YidC (599 aa).

The chain crosses the membrane as a helical span at residues 6-26 (NYFIAIALSVVIVLAWQFLYM). Positions 35 to 78 (RAEEARQAQQQTTQQQPAPGAAPGATVEGAPPASSTQAAATATR) are disordered. Positions 41–76 (QAQQQTTQQQPAPGAAPGATVEGAPPASSTQAAATA) are enriched in low complexity. 4 helical membrane passes run 378 to 398 (FGVAILLTTIVVKALFFPLAS), 448 to 468 (WPMLLQIPVFFALYKVIYVTI), 501 to 521 (VPHFLMIGVWPLVMGITMFLQ), and 536 to 556 (IFTWMPLIFTFMLASFPAGLV).

Belongs to the OXA1/ALB3/YidC family. Type 1 subfamily. As to quaternary structure, interacts with the Sec translocase complex via SecD. Specifically interacts with transmembrane segments of nascent integral membrane proteins during membrane integration.

The protein resides in the cell inner membrane. Its function is as follows. Required for the insertion and/or proper folding and/or complex formation of integral membrane proteins into the membrane. Involved in integration of membrane proteins that insert both dependently and independently of the Sec translocase complex, as well as at least some lipoproteins. Aids folding of multispanning membrane proteins. This Agrobacterium fabrum (strain C58 / ATCC 33970) (Agrobacterium tumefaciens (strain C58)) protein is Membrane protein insertase YidC.